Reading from the N-terminus, the 276-residue chain is 1H-3-hydroxy-4-oxoquinaldine 2,4-dioxygenase (276 aa).

In terms of domain architecture, AB hydrolase-1 spans 28–150; that stretch reads PAILLLPGWC…TLLKDPERWR (123 aa). Substrate contacts are provided by residues 36–38, 100–101, and Trp160; these read WCH and HS. The active-site Proton donor/acceptor is His251.

The protein belongs to the AB hydrolase superfamily. Requires None. Contrary to most other dioxygenases, this enzyme does not require a cofactor for catalysis. as cofactor.

The enzyme catalyses 3-hydroxy-2-methyl-1H-quinolin-4-one + O2 = N-acetylanthranilate + CO + H(+). In terms of biological role, ring-cleaving dioxygenase involved in quinaldine degradation and utilization. The protein is 1H-3-hydroxy-4-oxoquinaldine 2,4-dioxygenase (hod) of Paenarthrobacter nitroguajacolicus (Arthrobacter nitroguajacolicus).